A 271-amino-acid chain; its full sequence is Formamidopyrimidine-DNA glycosylase (271 aa).

Catalysis depends on proline 2, which acts as the Schiff-base intermediate with DNA. Glutamate 3 acts as the Proton donor in catalysis. The Proton donor; for beta-elimination activity role is filled by lysine 57. DNA contacts are provided by histidine 90, arginine 109, and lysine 150. An FPG-type zinc finger spans residues 235–269 (LVYGNKDKPCPKCGGKIESLIIGQRNSFFCPKCQK). Arginine 259 acts as the Proton donor; for delta-elimination activity in catalysis.

Belongs to the FPG family. In terms of assembly, monomer. Zn(2+) serves as cofactor.

The enzyme catalyses Hydrolysis of DNA containing ring-opened 7-methylguanine residues, releasing 2,6-diamino-4-hydroxy-5-(N-methyl)formamidopyrimidine.. The catalysed reaction is 2'-deoxyribonucleotide-(2'-deoxyribose 5'-phosphate)-2'-deoxyribonucleotide-DNA = a 3'-end 2'-deoxyribonucleotide-(2,3-dehydro-2,3-deoxyribose 5'-phosphate)-DNA + a 5'-end 5'-phospho-2'-deoxyribonucleoside-DNA + H(+). Its function is as follows. Involved in base excision repair of DNA damaged by oxidation or by mutagenic agents. Acts as a DNA glycosylase that recognizes and removes damaged bases. Has a preference for oxidized purines, such as 7,8-dihydro-8-oxoguanine (8-oxoG). Has AP (apurinic/apyrimidinic) lyase activity and introduces nicks in the DNA strand. Cleaves the DNA backbone by beta-delta elimination to generate a single-strand break at the site of the removed base with both 3'- and 5'-phosphates. The chain is Formamidopyrimidine-DNA glycosylase from Haemophilus influenzae (strain 86-028NP).